Here is a 427-residue protein sequence, read N- to C-terminus: MNPSPITIDLILEILSRLPAKSVRRFHCVSKRWASIFGSPYFKELFLTRSSTKPRLLFAIAEKGNKEKDCVWRFFSSPQLENPYEKSSSTLVATAEFHVRFSPDNLLICHYYDLKYFSIGYAFGLIYIYGNRGRARPLICNPTTGRYAILPNRYTYRKAFSFFGFDPIDKQYKALSMVYPSGPGHSRVITFGAGDLKWRRIKCSLRHDIKSEGVCINGVLYYLGDTSDWSRVNGNHVTSGYMIVCFDVRSEKFTFIDVKRFCRLINYKGKLAVIYWEDDVDIQELYYKKGIDVEEYVENNVNADATNELCVWILADVEKQEWSKHAYTWTDEKFFRRLVSIAGVTASGEIVFSMRKCNPKQPFYVFYFNPERNSLQRVEIQGFGEAVTKSCDVCTFVNHVEDLNVYDLKQLKSVHPPLVEPEYYDSD.

An F-box domain is found at 1-45 (MNPSPITIDLILEILSRLPAKSVRRFHCVSKRWASIFGSPYFKEL).

This Arabidopsis thaliana (Mouse-ear cress) protein is F-box protein At2g16450.